The chain runs to 352 residues: N-acetyl-gamma-glutamyl-phosphate reductase (352 aa).

Cysteine 155 is an active-site residue.

It belongs to the NAGSA dehydrogenase family. Type 1 subfamily.

The protein resides in the cytoplasm. It carries out the reaction N-acetyl-L-glutamate 5-semialdehyde + phosphate + NADP(+) = N-acetyl-L-glutamyl 5-phosphate + NADPH + H(+). The protein operates within amino-acid biosynthesis; L-arginine biosynthesis; N(2)-acetyl-L-ornithine from L-glutamate: step 3/4. Catalyzes the NADPH-dependent reduction of N-acetyl-5-glutamyl phosphate to yield N-acetyl-L-glutamate 5-semialdehyde. In Brachyspira hyodysenteriae (strain ATCC 49526 / WA1), this protein is N-acetyl-gamma-glutamyl-phosphate reductase.